A 216-amino-acid chain; its full sequence is uncharacterized protein (216 aa).

The helical transmembrane segment at 39–59 threads the bilayer; the sequence is VLPLTFIGSLLILILTIVYYF. Residues 59 to 108 adopt a coiled-coil conformation; that stretch reads FTLSGSVNELKNEISKEKSKKERLLSEIKRLEELKKTLETKKAIYEVVKI.

The protein localises to the membrane. This is an uncharacterized protein from Aquifex aeolicus (strain VF5).